The primary structure comprises 405 residues: Tryptophan synthase beta chain (405 aa).

Lys-95 is subject to N6-(pyridoxal phosphate)lysine.

This sequence belongs to the TrpB family. In terms of assembly, tetramer of two alpha and two beta chains. Requires pyridoxal 5'-phosphate as cofactor.

The enzyme catalyses (1S,2R)-1-C-(indol-3-yl)glycerol 3-phosphate + L-serine = D-glyceraldehyde 3-phosphate + L-tryptophan + H2O. Its pathway is amino-acid biosynthesis; L-tryptophan biosynthesis; L-tryptophan from chorismate: step 5/5. In terms of biological role, the beta subunit is responsible for the synthesis of L-tryptophan from indole and L-serine. The sequence is that of Tryptophan synthase beta chain from Pseudomonas putida (strain GB-1).